The chain runs to 358 residues: Homoserine O-acetyltransferase (358 aa).

An AB hydrolase-1 domain is found at 52–337 (NVILICHALT…DEPYGHDAFL (286 aa)). S148 acts as the Nucleophile in catalysis. R217 contributes to the substrate binding site. Residues D304 and H333 contribute to the active site. D334 is a binding site for substrate.

The protein belongs to the AB hydrolase superfamily. MetX family. In terms of assembly, homodimer.

The protein localises to the cytoplasm. The catalysed reaction is L-homoserine + acetyl-CoA = O-acetyl-L-homoserine + CoA. It functions in the pathway amino-acid biosynthesis; L-methionine biosynthesis via de novo pathway; O-acetyl-L-homoserine from L-homoserine: step 1/1. Its function is as follows. Transfers an acetyl group from acetyl-CoA to L-homoserine, forming acetyl-L-homoserine. This is Homoserine O-acetyltransferase from Chlorobium luteolum (strain DSM 273 / BCRC 81028 / 2530) (Pelodictyon luteolum).